Consider the following 196-residue polypeptide: MPIGVPKVPFRSPGEGDTSWVDIYNRLYRERLFFLGQEVDTEISNQLISLMIYLSIEKDTKDLYLFINSPGGWVISGMAIYDTMQFVRPDVQTIGMGLAASIASFILVGGAITKRIAFPHARVMIHQPASSFYEAQTGEFILEAEELLKIRETITRVYVQRTGKPIWVVSEDMERDVFMSATEAQAHGIVDLVAVQ.

Ser101 (nucleophile) is an active-site residue. Residue His126 is part of the active site.

It belongs to the peptidase S14 family. As to quaternary structure, component of the chloroplastic Clp protease core complex.

It is found in the plastid. It localises to the chloroplast stroma. The enzyme catalyses Hydrolysis of proteins to small peptides in the presence of ATP and magnesium. alpha-casein is the usual test substrate. In the absence of ATP, only oligopeptides shorter than five residues are hydrolyzed (such as succinyl-Leu-Tyr-|-NHMec, and Leu-Tyr-Leu-|-Tyr-Trp, in which cleavage of the -Tyr-|-Leu- and -Tyr-|-Trp bonds also occurs).. Its function is as follows. Cleaves peptides in various proteins in a process that requires ATP hydrolysis. Has a chymotrypsin-like activity. Plays a major role in the degradation of misfolded proteins. This is ATP-dependent Clp protease proteolytic subunit from Arabis hirsuta (Hairy rock-cress).